A 347-amino-acid chain; its full sequence is N6-Methyl-AMP deaminase-L (347 aa).

The Zn(2+) site is built by His19 and His21. Residues His21, Asn23, His69, 101–104, Asp142, and Gly175 each bind N(6)-methyl-AMP; that span reads STPR. His202 is a Zn(2+) binding site. Residues Glu205, Asp283, and Asp284 each coordinate N(6)-methyl-AMP. Residue Glu205 is the Proton donor of the active site. Residue Asp283 participates in Zn(2+) binding.

It belongs to the metallo-dependent hydrolases superfamily. Adenosine and AMP deaminases family. Monomer. The cofactor is Zn(2+).

It carries out the reaction N(6)-methyl-AMP + H2O + H(+) = IMP + methylamine. In terms of biological role, catalyzes the hydrolysis of the free cytosolic methylated adenosine nucleotide N(6)-methyl-AMP (N6-mAMP) to produce inositol monophosphate (IMP) and methylamine. Is required for the catabolism of cytosolic N6-mAMP, which is derived from the degradation of mRNA containing N6-methylated adenine (m6A). The polypeptide is N6-Methyl-AMP deaminase-L (mapda.L) (Xenopus laevis (African clawed frog)).